The chain runs to 711 residues: Hydroperoxide isomerase ALOXE3 (711 aa).

Positions 2-119 (AVYRLCVTTG…TVELRPGTAR (118 aa)) constitute a PLAT domain. One can recognise a Lipoxygenase domain in the interval 120–711 (TICQDSLPLL…PPLIENSVSI (592 aa)). Residues His-408, His-413, His-588, Asn-592, and Ile-711 each coordinate Fe cation.

This sequence belongs to the lipoxygenase family. Fe cation serves as cofactor. Skin specific.

The protein resides in the cytoplasm. It catalyses the reaction a hydroperoxyeicosatetraenoate = a hydroxy-epoxy-eicosatetraenoate. It carries out the reaction (8S)-hydroperoxy-(5Z,9E,11Z,14Z)-eicosatetraenoate = (10R)-hydroxy-(8S,9S)-epoxy-(5Z,11Z,14Z)-eicosatrienoate. The catalysed reaction is (12R)-hydroperoxy-(5Z,8Z,10E,14Z)-eicosatetraenoate = (8R)-hydroxy-(11R,12R)-epoxy-(5Z,9E,14Z)-eicosatrienoate. The enzyme catalyses (12S)-hydroperoxy-(5Z,8Z,10E,14Z)-eicosatetraenoate = (8R)-hydroxy-(11S,12S)-epoxy-(5Z,9E,14Z)-eicosatrienoate. It catalyses the reaction (12S)-hydroperoxy-(5Z,8Z,10E,14Z)-eicosatetraenoate = (10R)-hydroxy-(11S,12S)-epoxy-(5Z,8Z,14Z)-eicosatrienoate. It carries out the reaction (15S)-hydroperoxy-(5Z,8Z,11Z,13E)-eicosatetraenoate = (13R)-hydroxy-(14S,15S)-epoxy-(5Z,8Z,11Z)-eicosatrienoate. The catalysed reaction is (13S)-hydroperoxy-(9Z,11E)-octadecadienoate = 11-hydroxy-(12S,13S)-epoxy-(9Z)-octadecenoate. The enzyme catalyses (5S)-hydroperoxy-(6E,8Z,11Z,14Z)-eicosatetraenoate = 7R-hydroxy-5S,6S-epoxy-(8Z,11Z,14Z)-eicosatrienoate. It catalyses the reaction N-[omega-(9R)-hydroperoxy-(10E,12Z)-octadecadienoyloxy]acyl-beta-D-glucosyl-(1&lt;-&gt;1)-octadecasphing-4E-enine = a N-[omega-(9R,10R)-epoxy-(13R)-hydroxy-(11E)-octadecenoyloxy]acyl-beta-D-glucosyl-(1&lt;-&gt;1)-sphing-4E-enine. It carries out the reaction a N-[omega-(9R)-hydroperoxy-(10E,12Z)-octadecadienoyloxy]-acylsphin-4E-enine = a N-[omega-(9R,10R)-epoxy-(13R)-hydroxy-(11E)-octadecenoyloxy]-acylsphing-4E-enine. The catalysed reaction is a hydroperoxyeicosatetraenoate = an oxoeicosatetraenoate + H2O. The enzyme catalyses (8R)-hydroperoxy-(5Z,9E,11Z,14Z)-eicosatetraenoate = 8-oxo-(5Z,9E,11Z,14Z)-eicosatetraenoate + H2O. It catalyses the reaction (8S)-hydroperoxy-(5Z,9E,11Z,14Z)-eicosatetraenoate = 8-oxo-(5Z,9E,11Z,14Z)-eicosatetraenoate + H2O. It carries out the reaction (12R)-hydroperoxy-(5Z,8Z,10E,14Z)-eicosatetraenoate = 12-oxo-(5Z,8Z,10E,14Z)-eicosatetraenoate + H2O. The catalysed reaction is (12S)-hydroperoxy-(5Z,8Z,10E,14Z)-eicosatetraenoate = 12-oxo-(5Z,8Z,10E,14Z)-eicosatetraenoate + H2O. The enzyme catalyses (15S)-hydroperoxy-(5Z,8Z,11Z,13E)-eicosatetraenoate = 15-oxo-(5Z,8Z,11Z,13E)-eicosatetraenoate + H2O. It catalyses the reaction (13S)-hydroperoxy-(9Z,11E)-octadecadienoate = 13-oxo-(9Z,11E)-octadecadienoate + H2O. Its pathway is lipid metabolism; hydroperoxy eicosatetraenoic acid biosynthesis. It participates in lipid metabolism; sphingolipid metabolism. Non-heme iron-containing lipoxygenase which is atypical in that it displays a prominent hydroperoxide isomerase activity and a reduced lipoxygenases activity. The hydroperoxide isomerase activity catalyzes the isomerization of hydroperoxides, derived from arachidonic and linoleic acid by ALOX12B, into hepoxilin-type epoxyalcohols and ketones. In presence of oxygen, oxygenates polyunsaturated fatty acids, including arachidonic acid, to produce fatty acid hydroperoxides. In the skin, acts downstream of ALOX12B on the linoleate moiety of esterified omega-hydroxyacyl-sphingosine (EOS) ceramides to produce an epoxy-ketone derivative, a crucial step in the conjugation of omega-hydroxyceramide to membrane proteins. Therefore plays a crucial role in the synthesis of corneocytes lipid envelope and the establishment of the skin barrier to water loss. In parallel, it may have a signaling function in barrier formation through the production of hepoxilins metabolites. Also plays a role in adipocyte differentiation through hepoxilin A3 and hepoxilin B3 production which in turn activate PPARG. Through the production of hepoxilins in the spinal cord, it may regulate inflammatory tactile allodynia. This is Hydroperoxide isomerase ALOXE3 from Mus musculus (Mouse).